Consider the following 221-residue polypeptide: NAD(P)H-hydrate epimerase (221 aa).

The 211-residue stretch at 9-219 folds into the YjeF N-terminal domain; sequence MRELETAAVK…NIGLPKELLS (211 aa). Residue 60-64 participates in (6S)-NADPHX binding; sequence GNGGD. Positions 61 and 131 each coordinate K(+). Residues 135 to 141, Tyr-146, and Asp-164 contribute to the (6S)-NADPHX site; that span reads GIGFKGE. A K(+)-binding site is contributed by Ser-167.

It belongs to the NnrE/AIBP family. It depends on K(+) as a cofactor.

It catalyses the reaction (6R)-NADHX = (6S)-NADHX. The enzyme catalyses (6R)-NADPHX = (6S)-NADPHX. Catalyzes the epimerization of the S- and R-forms of NAD(P)HX, a damaged form of NAD(P)H that is a result of enzymatic or heat-dependent hydration. This is a prerequisite for the S-specific NAD(P)H-hydrate dehydratase to allow the repair of both epimers of NAD(P)HX. The chain is NAD(P)H-hydrate epimerase from Elusimicrobium minutum (strain Pei191).